A 295-amino-acid chain; its full sequence is Glycine--tRNA ligase alpha subunit (295 aa).

This sequence belongs to the class-II aminoacyl-tRNA synthetase family. As to quaternary structure, tetramer of two alpha and two beta subunits.

The protein localises to the cytoplasm. The catalysed reaction is tRNA(Gly) + glycine + ATP = glycyl-tRNA(Gly) + AMP + diphosphate. This is Glycine--tRNA ligase alpha subunit from Thermosynechococcus vestitus (strain NIES-2133 / IAM M-273 / BP-1).